The primary structure comprises 548 residues: Chaperonin GroEL (548 aa).

ATP contacts are provided by residues 30-33, lysine 51, 87-91, glycine 415, 479-481, and aspartate 495; these read TLGP, DGTTT, and NAA. The interval 525–548 is disordered; that stretch reads PKEDKTSDASSSPAGGMGGMGGMM. Residues 539–548 are compositionally biased toward gly residues; the sequence is GGMGGMGGMM.

Belongs to the chaperonin (HSP60) family. As to quaternary structure, forms a cylinder of 14 subunits composed of two heptameric rings stacked back-to-back. Interacts with the co-chaperonin GroES.

It is found in the cytoplasm. The enzyme catalyses ATP + H2O + a folded polypeptide = ADP + phosphate + an unfolded polypeptide.. Together with its co-chaperonin GroES, plays an essential role in assisting protein folding. The GroEL-GroES system forms a nano-cage that allows encapsulation of the non-native substrate proteins and provides a physical environment optimized to promote and accelerate protein folding. The protein is Chaperonin GroEL of Buchnera aphidicola subsp. Rhopalosiphum padi.